Consider the following 481-residue polypeptide: Cholesterol 16,22-dihydroxylase CYP90G4 (481 aa).

A helical transmembrane segment spans residues 4–24; it reads SYLSFFVLSSILVLTLIFFFM. Cys426 is a binding site for heme.

This sequence belongs to the cytochrome P450 family. As to expression, mainly expressed in leaves and seed pods and, at low levels, in flowers and stems.

It localises to the membrane. Its pathway is steroid metabolism; cholesterol metabolism. Functionally, involved in the biosynthesis of spiroketal steroid and saponin natural products from cholesterol such as diosgenin and analogs (e.g. furostanol and spirostanol), plant defense compounds used as main precursors for the industrial production of steroid hormones. During the 5,6-spiroketalization of cholesterol, catalyzes the hydroxylation of cholesterol to form 16S,22S-dihydroxycholesterol and, possibly, the subsequent conversion of 16S,22S-dihydroxycholesterol into 16-oxo-22-hydroxy-cholesterol and 16-hydroxy-22-oxo-cholesterol. 16-hydroxy-22-oxo-cholesterol submit a spontaneous reaction leading to the production of furostanol-type steroid diastereomers, precursors of diosgenin. This chain is Cholesterol 16,22-dihydroxylase CYP90G4, found in Trigonella foenum-graecum (Fenugreek).